The primary structure comprises 239 residues: Nicotinamide riboside transporter PnuC (239 aa).

The Cytoplasmic segment spans residues Met1 to Asp21. A helical membrane pass occupies residues Leu22–Leu42. At Glu43–Tyr48 the chain is on the periplasmic side. The chain crosses the membrane as a helical span at residues Phe49–Tyr68. Over Ala69–Leu71 the chain is Cytoplasmic. Residues Leu72–Ser89 traverse the membrane as a helical segment. At Arg90 to Ala109 the chain is on the periplasmic side. The chain crosses the membrane as a helical span at residues Met110–Ile127. Topologically, residues Asp128–Asp157 are cytoplasmic. The chain crosses the membrane as a helical span at residues Ala158–Met177. At Thr178–Glu183 the chain is on the periplasmic side. Residues Asn184 to Ala206 form a helical membrane-spanning segment. Beta-nicotinamide D-riboside is bound by residues Trp188 and Asn192. Over Met207 to Arg239 the chain is Cytoplasmic.

Belongs to the nicotinamide ribonucleoside (NR) uptake permease (TC 4.B.1) family.

The protein localises to the cell inner membrane. Functionally, required for nicotinamide riboside transport across the inner membrane. This is Nicotinamide riboside transporter PnuC (pnuC) from Salmonella typhimurium (strain LT2 / SGSC1412 / ATCC 700720).